The following is a 128-amino-acid chain: Holo-[acyl-carrier-protein] synthase (128 aa).

The Mg(2+) site is built by aspartate 8 and glutamate 59.

The protein belongs to the P-Pant transferase superfamily. AcpS family. Mg(2+) is required as a cofactor.

Its subcellular location is the cytoplasm. It carries out the reaction apo-[ACP] + CoA = holo-[ACP] + adenosine 3',5'-bisphosphate + H(+). Transfers the 4'-phosphopantetheine moiety from coenzyme A to a Ser of acyl-carrier-protein. The sequence is that of Holo-[acyl-carrier-protein] synthase from Rickettsia typhi (strain ATCC VR-144 / Wilmington).